A 65-amino-acid chain; its full sequence is uncharacterized protein (65 aa).

Residues 1-20 (MRFSNCFNKFKFCIGTEKKY) are Cytoplasmic-facing. A helical membrane pass occupies residues 21-43 (SFPICTSTYTSFSLFACIWSIFI). The Extracellular portion of the chain corresponds to 44–65 (HISLNKSFIYQKSWYYSFFQNR).

The protein resides in the host membrane. This is an uncharacterized protein from Acidianus sp. F28 (AFV-2).